The sequence spans 608 residues: Zinc finger protein 652 (608 aa).

Residue Ser57 is modified to Phosphoserine. The segment at 61 to 232 (VLADTKMSKP…KRATKEAKAP (172 aa)) is disordered. Over residues 71–97 (HLHETEEQPYFREPRAVSDVHTVKEDR) the composition is skewed to basic and acidic residues. Composition is skewed to acidic residues over residues 98–108 (ENSDDTEEEEE) and 151–162 (EEDEEETEEEAT). Ser100 carries the phosphoserine modification. Residue Thr103 is modified to Phosphothreonine. The segment covering 194–208 (AASAAAATTSPAPRT) has biased composition (low complexity). 2 positions are modified to phosphoserine: Ser196 and Ser203. The segment at 244-267 (LTCEKCPRVFNTRWYLEKHMNVTH) adopts a C2H2-type 1 zinc-finger fold. A C2H2-type 2; degenerate zinc finger spans residues 271–293 (QICDKCGKKFVLESELSLHQQTD). 6 consecutive C2H2-type zinc fingers follow at residues 298–321 (IQCV…KIVH), 328–350 (FACE…MVAH), 356–378 (FTCE…SLQH), 384–406 (FRCE…MSIH), 412–434 (FMCQ…MKTH), and 440–462 (FICE…RRTH). The C2H2-type 9; degenerate zinc-finger motif lies at 468–491 (YPCDVCGQRFRFSNMLKAHKEKCF). Residues 497–608 (VNVPPAVQIP…KNSAAPAQHH (112 aa)) form a mediates interaction with CBFA2T3 region.

This sequence belongs to the krueppel C2H2-type zinc-finger protein family. In terms of assembly, interacts with CBFA2T3.

It localises to the nucleus. Its function is as follows. Functions as a transcriptional repressor. The chain is Zinc finger protein 652 (Znf652) from Mus musculus (Mouse).